The primary structure comprises 562 residues: Urocanate hydratase (562 aa).

NAD(+) contacts are provided by residues Gly-53–Gly-54, Gln-131, Gly-177–Gly-179, Glu-197, Arg-202, Asn-243–Ala-244, Gln-268–His-272, Tyr-278–Leu-279, and Tyr-327. Residue Cys-415 is part of the active site. Gly-497 provides a ligand contact to NAD(+).

It belongs to the urocanase family. NAD(+) is required as a cofactor.

The protein localises to the cytoplasm. It catalyses the reaction 4-imidazolone-5-propanoate = trans-urocanate + H2O. It participates in amino-acid degradation; L-histidine degradation into L-glutamate; N-formimidoyl-L-glutamate from L-histidine: step 2/3. Functionally, catalyzes the conversion of urocanate to 4-imidazolone-5-propionate. The chain is Urocanate hydratase from Chelativorans sp. (strain BNC1).